Here is a 282-residue protein sequence, read N- to C-terminus: Pantothenate synthetase (282 aa).

Residue 32–39 (MGALHEGH) participates in ATP binding. The active-site Proton donor is His39. Gln63 is a (R)-pantoate binding site. Gln63 is a binding site for beta-alanine. 149–152 (GEKD) is an ATP binding site. Residue Gln155 participates in (R)-pantoate binding. ATP contacts are provided by residues Val178 and 186-189 (LSSR).

Belongs to the pantothenate synthetase family. As to quaternary structure, homodimer.

The protein resides in the cytoplasm. The enzyme catalyses (R)-pantoate + beta-alanine + ATP = (R)-pantothenate + AMP + diphosphate + H(+). It participates in cofactor biosynthesis; (R)-pantothenate biosynthesis; (R)-pantothenate from (R)-pantoate and beta-alanine: step 1/1. Its function is as follows. Catalyzes the condensation of pantoate with beta-alanine in an ATP-dependent reaction via a pantoyl-adenylate intermediate. This Paracoccus denitrificans (strain Pd 1222) protein is Pantothenate synthetase.